Reading from the N-terminus, the 141-residue chain is Hemoglobin subunit alpha (141 aa).

In terms of domain architecture, Globin spans 1–141 (VLSSADKANI…VSTVLTSKYR (141 aa)). Position 3 is a phosphoserine (S3). An N6-succinyllysine mark is found at K7 and K11. An N6-acetyllysine; alternate modification is found at K16. K16 carries the N6-succinyllysine; alternate modification. Y24 is subject to Phosphotyrosine. K40 carries the post-translational modification N6-succinyllysine. S49 is modified (phosphoserine). Position 58 (H58) interacts with O2. H87 provides a ligand contact to heme b. S102 is subject to Phosphoserine. The residue at position 108 (T108) is a Phosphothreonine. Residue S131 is modified to Phosphoserine. A phosphothreonine mark is found at T134 and T137. A Phosphoserine modification is found at S138.

The protein belongs to the globin family. In terms of assembly, heterotetramer of two alpha chains and two beta chains. In terms of tissue distribution, red blood cells.

Its function is as follows. Involved in oxygen transport from the lung to the various peripheral tissues. In terms of biological role, hemopressin acts as an antagonist peptide of the cannabinoid receptor CNR1. Hemopressin-binding efficiently blocks cannabinoid receptor CNR1 and subsequent signaling. The protein is Hemoglobin subunit alpha (HBA) of Crocuta crocuta (Spotted hyena).